A 206-amino-acid polypeptide reads, in one-letter code: Small ribosomal subunit protein uS4 (206 aa).

The disordered stretch occupies residues 18–46 (NIWGRPKSPVNRREYGPGQHGQRRKGKIS). One can recognise an S4 RNA-binding domain in the interval 94 to 154 (RRLDAVVYRA…DRSKQMVALI (61 aa)).

It belongs to the universal ribosomal protein uS4 family. As to quaternary structure, part of the 30S ribosomal subunit. Contacts protein S5. The interaction surface between S4 and S5 is involved in control of translational fidelity.

One of the primary rRNA binding proteins, it binds directly to 16S rRNA where it nucleates assembly of the body of the 30S subunit. Functionally, with S5 and S12 plays an important role in translational accuracy. The chain is Small ribosomal subunit protein uS4 from Roseobacter denitrificans (strain ATCC 33942 / OCh 114) (Erythrobacter sp. (strain OCh 114)).